A 69-amino-acid chain; its full sequence is Light-harvesting protein B-870 beta chain (69 aa).

Residues Met1–Ala2 constitute a propeptide that is removed on maturation. The Cytoplasmic segment spans residues Glu3 to Lys22. A bacteriochlorophyll is bound by residues His21 and His39. A helical transmembrane segment spans residues Ile23–Trp45. Over Arg46–Ser56 the chain is Periplasmic. Positions Ala57–Ser69 are excised as a propeptide.

It belongs to the antenna complex beta subunit family. In terms of assembly, the core complex is formed by different alpha and beta chains, binding bacteriochlorophyll molecules, and arranged most probably in tetrameric structures disposed around the reaction center. The non-pigmented gamma chains may constitute additional components.

It localises to the cell inner membrane. In terms of biological role, antenna complexes are light-harvesting systems, which transfer the excitation energy to the reaction centers. This chain is Light-harvesting protein B-870 beta chain, found in Rhodospirillum rubrum (strain ATCC 11170 / ATH 1.1.1 / DSM 467 / LMG 4362 / NCIMB 8255 / S1).